Reading from the N-terminus, the 529-residue chain is Peptide chain release factor 3 (529 aa).

Positions 11–280 (NKRRTFAIIS…GLTQWAPAPQ (270 aa)) constitute a tr-type G domain. Residues 20–27 (SHPDAGKT), 88–92 (DTPGH), and 142–145 (NKLD) each bind GTP.

Belongs to the TRAFAC class translation factor GTPase superfamily. Classic translation factor GTPase family. PrfC subfamily.

The protein resides in the cytoplasm. Increases the formation of ribosomal termination complexes and stimulates activities of RF-1 and RF-2. It binds guanine nucleotides and has strong preference for UGA stop codons. It may interact directly with the ribosome. The stimulation of RF-1 and RF-2 is significantly reduced by GTP and GDP, but not by GMP. This Pasteurella multocida (strain Pm70) protein is Peptide chain release factor 3 (prfC).